Here is a 288-residue protein sequence, read N- to C-terminus: Bifunctional protein FolD (288 aa).

NADP(+) contacts are provided by residues Gly163 to Ser165, Ser188, and Ile229.

It belongs to the tetrahydrofolate dehydrogenase/cyclohydrolase family. Homodimer.

The catalysed reaction is (6R)-5,10-methylene-5,6,7,8-tetrahydrofolate + NADP(+) = (6R)-5,10-methenyltetrahydrofolate + NADPH. It carries out the reaction (6R)-5,10-methenyltetrahydrofolate + H2O = (6R)-10-formyltetrahydrofolate + H(+). It functions in the pathway one-carbon metabolism; tetrahydrofolate interconversion. Functionally, catalyzes the oxidation of 5,10-methylenetetrahydrofolate to 5,10-methenyltetrahydrofolate and then the hydrolysis of 5,10-methenyltetrahydrofolate to 10-formyltetrahydrofolate. This Campylobacter curvus (strain 525.92) protein is Bifunctional protein FolD.